Here is a 49-residue protein sequence, read N- to C-terminus: Large ribosomal subunit protein bL33 (49 aa).

It belongs to the bacterial ribosomal protein bL33 family.

This Desulforamulus reducens (strain ATCC BAA-1160 / DSM 100696 / MI-1) (Desulfotomaculum reducens) protein is Large ribosomal subunit protein bL33.